Reading from the N-terminus, the 649-residue chain is Mediator of RNA polymerase II transcription subunit 17 (649 aa).

The tract at residues 51 to 79 is disordered; the sequence is QGSGSEEEEAAGPDGDAPDWGGAGADQDD.

This sequence belongs to the Mediator complex subunit 17 family. In terms of assembly, component of the Mediator complex, which is composed of MED1, MED4, MED6, MED7, MED8, MED9, MED10, MED11, MED12, MED13, MED13L, MED14, MED15, MED16, MED17, MED18, MED19, MED20, MED21, MED22, MED23, MED24, MED25, MED26, MED27, MED29, MED30, MED31, CCNC, CDK8 and CDC2L6/CDK11. The MED12, MED13, CCNC and CDK8 subunits form a distinct module termed the CDK8 module. Mediator containing the CDK8 module is less active than Mediator lacking this module in supporting transcriptional activation. Individual preparations of the Mediator complex lacking one or more distinct subunits have been variously termed ARC, CRSP, DRIP, PC2, SMCC and TRAP. Interacts with STAT2. Interacts with GATA1 and PPARG.

It is found in the nucleus. In terms of biological role, component of the Mediator complex, a coactivator involved in the regulated transcription of nearly all RNA polymerase II-dependent genes. Mediator functions as a bridge to convey information from gene-specific regulatory proteins to the basal RNA polymerase II transcription machinery. Mediator is recruited to promoters by direct interactions with regulatory proteins and serves as a scaffold for the assembly of a functional preinitiation complex with RNA polymerase II and the general transcription factors. This chain is Mediator of RNA polymerase II transcription subunit 17 (Med17), found in Mus musculus (Mouse).